Consider the following 335-residue polypeptide: Phosphatidylcholine-sterol acyltransferase (335 aa).

The first 18 residues, 1-18 (MKKWFVCLLGLVALTVQA), serve as a signal peptide directing secretion. The active-site Nucleophile is serine 34. Active-site residues include aspartate 306 and histidine 309.

The protein belongs to the 'GDSL' lipolytic enzyme family.

The catalysed reaction is a sterol + a 1,2-diacyl-sn-glycero-3-phosphocholine = a sterol ester + a 1-acyl-sn-glycero-3-phosphocholine. Its function is as follows. Fatty acid transfer between phosphatidylcholine and cholesterol. In Aeromonas hydrophila, this protein is Phosphatidylcholine-sterol acyltransferase.